Consider the following 429-residue polypeptide: Argininosuccinate lyase (429 aa).

This sequence belongs to the lyase 1 family. Argininosuccinate lyase subfamily.

It is found in the cytoplasm. The catalysed reaction is 2-(N(omega)-L-arginino)succinate = fumarate + L-arginine. Its pathway is amino-acid biosynthesis; L-arginine biosynthesis; L-arginine from L-ornithine and carbamoyl phosphate: step 3/3. The chain is Argininosuccinate lyase from Pyrobaculum islandicum (strain DSM 4184 / JCM 9189 / GEO3).